Here is a 139-residue protein sequence, read N- to C-terminus: Protein FAM216B (139 aa).

It belongs to the FAM216 family.

In Homo sapiens (Human), this protein is Protein FAM216B (FAM216B).